Reading from the N-terminus, the 339-residue chain is Methionine import ATP-binding protein MetN 2 (339 aa).

One can recognise an ABC transporter domain in the interval 2–241 (ISFNNVSKVY…PKTKTTQNFV (240 aa)). 38 to 45 (GFSGAGKS) provides a ligand contact to ATP.

The protein belongs to the ABC transporter superfamily. Methionine importer (TC 3.A.1.24) family. As to quaternary structure, the complex is composed of two ATP-binding proteins (MetN), two transmembrane proteins (MetI) and a solute-binding protein (MetQ).

It localises to the cell membrane. It carries out the reaction L-methionine(out) + ATP + H2O = L-methionine(in) + ADP + phosphate + H(+). The enzyme catalyses D-methionine(out) + ATP + H2O = D-methionine(in) + ADP + phosphate + H(+). In terms of biological role, part of the ABC transporter complex MetNIQ involved in methionine import. Responsible for energy coupling to the transport system. The polypeptide is Methionine import ATP-binding protein MetN 2 (Bacillus cereus (strain ZK / E33L)).